The following is a 175-amino-acid chain: Ribosome maturation factor RimM (175 aa).

The 78-residue stretch at 98–175 (EGEYYWHQLE…EMRVDWDADF (78 aa)) folds into the PRC barrel domain.

Belongs to the RimM family. In terms of assembly, binds ribosomal protein uS19.

It is found in the cytoplasm. Its function is as follows. An accessory protein needed during the final step in the assembly of 30S ribosomal subunit, possibly for assembly of the head region. Essential for efficient processing of 16S rRNA. May be needed both before and after RbfA during the maturation of 16S rRNA. It has affinity for free ribosomal 30S subunits but not for 70S ribosomes. This is Ribosome maturation factor RimM from Pseudomonas aeruginosa (strain ATCC 15692 / DSM 22644 / CIP 104116 / JCM 14847 / LMG 12228 / 1C / PRS 101 / PAO1).